The primary structure comprises 153 residues: Small ribosomal subunit protein uS5c (153 aa).

One can recognise an S5 DRBM domain in the interval 11–74 (WQERVIQIRR…VDAKKQLINI (64 aa)).

It belongs to the universal ribosomal protein uS5 family. As to quaternary structure, part of the 30S ribosomal subunit. Contacts protein S4.

It is found in the plastid. The protein resides in the chloroplast. In terms of biological role, with S4 and S12 plays an important role in translational accuracy. This Cyanidioschyzon merolae (strain NIES-3377 / 10D) (Unicellular red alga) protein is Small ribosomal subunit protein uS5c (rps5).